We begin with the raw amino-acid sequence, 189 residues long: Prophage DNA-packing protein NohA (189 aa).

The protein belongs to the terminase small subunit family.

This Escherichia coli (strain K12) protein is Prophage DNA-packing protein NohA (nohA).